The chain runs to 208 residues: Uracil phosphoribosyltransferase (208 aa).

5-phospho-alpha-D-ribose 1-diphosphate contacts are provided by residues Arg78, Arg103, and 130–138; that span reads DPMLATGGT. Uracil-binding positions include Ile193 and 198 to 200; that span reads GDA. Asp199 serves as a coordination point for 5-phospho-alpha-D-ribose 1-diphosphate.

This sequence belongs to the UPRTase family. Mg(2+) serves as cofactor.

The catalysed reaction is UMP + diphosphate = 5-phospho-alpha-D-ribose 1-diphosphate + uracil. It participates in pyrimidine metabolism; UMP biosynthesis via salvage pathway; UMP from uracil: step 1/1. With respect to regulation, allosterically activated by GTP. In terms of biological role, catalyzes the conversion of uracil and 5-phospho-alpha-D-ribose 1-diphosphate (PRPP) to UMP and diphosphate. This Maridesulfovibrio salexigens (strain ATCC 14822 / DSM 2638 / NCIMB 8403 / VKM B-1763) (Desulfovibrio salexigens) protein is Uracil phosphoribosyltransferase.